A 419-amino-acid chain; its full sequence is RNA polymerase sigma factor sigD, chloroplastic (419 aa).

Residues 1–52 constitute a chloroplast transit peptide; the sequence is MATTIPTTATATMCPSPPVPTISPLLRTTHQCQPSPSLSSPFSIKLSTALVC. Residues 207–220 carry the Polymerase core binding motif; it reads DLIQEGSIGLLRGA. The segment at residues 377-396 is a DNA-binding region (H-T-H motif); it reads FEEIGKSLKLSRERVRQING.

Belongs to the sigma-70 factor family. As to expression, mostly expressed in leaves, and to a lesser extent in roots. Present in seedlings.

The protein resides in the plastid. Its subcellular location is the chloroplast. Its function is as follows. Sigma factors are initiation factors that promote the attachment of plastid-encoded RNA polymerase (PEP) to specific initiation sites and are then released. Regulates transcription of the ndhF gene which codes for a subunit of the plastid NDH [NAD(P)H dehydrogenase] complex. In Arabidopsis thaliana (Mouse-ear cress), this protein is RNA polymerase sigma factor sigD, chloroplastic (SIGD).